A 598-amino-acid polypeptide reads, in one-letter code: Sulfoacetaldehyde acetyltransferase (598 aa).

The protein belongs to the TPP enzyme family. Homotetramer. It depends on Mg(2+) as a cofactor. Requires thiamine diphosphate as cofactor.

The protein resides in the cytoplasm. The enzyme catalyses acetyl phosphate + sulfite + H(+) = sulfoacetaldehyde + phosphate. The protein operates within organosulfur degradation; taurine degradation via aerobic pathway; acetyl phosphate and sulfite from taurine: step 2/2. This Castellaniella defragrans (Alcaligenes defragrans) protein is Sulfoacetaldehyde acetyltransferase.